The primary structure comprises 186 residues: Ribosome-recycling factor (186 aa).

It belongs to the RRF family.

Its subcellular location is the cytoplasm. Functionally, responsible for the release of ribosomes from messenger RNA at the termination of protein biosynthesis. May increase the efficiency of translation by recycling ribosomes from one round of translation to another. The sequence is that of Ribosome-recycling factor from Burkholderia multivorans (strain ATCC 17616 / 249).